We begin with the raw amino-acid sequence, 465 residues long: MKKVVTRFAPSPTGQLHIGGARTALFSWLLARHFDGIFHLRIEDTDLERSKQEYTDTILESMSWLGLNWDGEIVYQSKRNERYHEVIDILLQTGHAYWCHCSIEQIEKMREEARQKGEKPRYNGCCREKKLSANPSGVVRLKVPSAGQVTFNDLVKGQVTVQNTELDDMVLQRSDGTPTYQLAVVVDDHDMQVTHIIRGDDHVSNTPKQILIYNALGWEIPIFGHIPMILGSDRQKLSKRHGARAVIEYQEDGFLPEAMLNYLVRLGWSYGDQEIFTLQELISFFDGTNLHSAPAAFNIEKLLWLNAHYLRRLPVSQIANLMLPFVRKEGFTHITKERIEAVLPLYVERADTLKELVYLMKPVLISASDLTYKEDDIKKIVTNESKEHLDRLRNLLEAEINFEPLYIEQLIHEYITSNNLKFKEIGPILRLAVSGVLGGPSLQELIVVIGKKEVLARLDKLRFQL.

The 'HIGH' region signature appears at 10–20 (PSPTGQLHIGG). Positions 99, 101, 126, and 128 each coordinate Zn(2+). Positions 236 to 240 (KLSKR) match the 'KMSKS' region motif. Lys239 lines the ATP pocket.

The protein belongs to the class-I aminoacyl-tRNA synthetase family. Glutamate--tRNA ligase type 1 subfamily. As to quaternary structure, monomer. The cofactor is Zn(2+).

It localises to the cytoplasm. It catalyses the reaction tRNA(Glu) + L-glutamate + ATP = L-glutamyl-tRNA(Glu) + AMP + diphosphate. In terms of biological role, catalyzes the attachment of glutamate to tRNA(Glu) in a two-step reaction: glutamate is first activated by ATP to form Glu-AMP and then transferred to the acceptor end of tRNA(Glu). The protein is Glutamate--tRNA ligase of Lawsonia intracellularis (strain PHE/MN1-00).